A 306-amino-acid chain; its full sequence is Dermonecrotic toxin LiSicTox-alphaIA2bi (306 aa).

The signal sequence occupies residues 1–18; the sequence is MLPYIALILVCWSVLSQA. Positions 19–26 are excised as a propeptide; sequence AQTDVEGR. The active site involves His38. Residues Glu58 and Asp60 each contribute to the Mg(2+) site. The active-site Nucleophile is His74. 2 disulfide bridges follow: Cys78–Cys84 and Cys80–Cys223. Asp118 serves as a coordination point for Mg(2+). Asn283 carries an N-linked (GlcNAc...) asparagine glycan.

It belongs to the arthropod phospholipase D family. Class II subfamily. Requires Mg(2+) as cofactor. As to expression, expressed by the venom gland.

It is found in the secreted. The enzyme catalyses an N-(acyl)-sphingosylphosphocholine = an N-(acyl)-sphingosyl-1,3-cyclic phosphate + choline. It catalyses the reaction an N-(acyl)-sphingosylphosphoethanolamine = an N-(acyl)-sphingosyl-1,3-cyclic phosphate + ethanolamine. It carries out the reaction a 1-acyl-sn-glycero-3-phosphocholine = a 1-acyl-sn-glycero-2,3-cyclic phosphate + choline. The catalysed reaction is a 1-acyl-sn-glycero-3-phosphoethanolamine = a 1-acyl-sn-glycero-2,3-cyclic phosphate + ethanolamine. Dermonecrotic toxins cleave the phosphodiester linkage between the phosphate and headgroup of certain phospholipids (sphingolipid and lysolipid substrates), forming an alcohol (often choline) and a cyclic phosphate. This toxin acts on sphingomyelin (SM). It may also act on ceramide phosphoethanolamine (CPE), lysophosphatidylcholine (LPC) and lysophosphatidylethanolamine (LPE), but not on lysophosphatidylserine (LPS), and lysophosphatidylglycerol (LPG). It acts by transphosphatidylation, releasing exclusively cyclic phosphate products as second products. Induces dermonecrosis, hemolysis, increased vascular permeability, edema, inflammatory response, and platelet aggregation. In Loxosceles intermedia (Brown spider), this protein is Dermonecrotic toxin LiSicTox-alphaIA2bi.